The sequence spans 386 residues: Alanine racemase (386 aa).

Residue K48 is the Proton acceptor; specific for D-alanine of the active site. An N6-(pyridoxal phosphate)lysine modification is found at K48. R147 serves as a coordination point for substrate. Residue Y279 is the Proton acceptor; specific for L-alanine of the active site. Substrate is bound at residue M327.

It belongs to the alanine racemase family. The cofactor is pyridoxal 5'-phosphate.

The enzyme catalyses L-alanine = D-alanine. It participates in amino-acid biosynthesis; D-alanine biosynthesis; D-alanine from L-alanine: step 1/1. Functionally, catalyzes the interconversion of L-alanine and D-alanine. May also act on other amino acids. The chain is Alanine racemase (alr) from Prochlorococcus marinus (strain SARG / CCMP1375 / SS120).